A 223-amino-acid chain; its full sequence is Adenylate kinase 4, mitochondrial (223 aa).

15–20 provides a ligand contact to a ribonucleoside 5'-triphosphate; the sequence is GSGKGT. The NMP stretch occupies residues 35–64; sequence SSGHLLRENLKTNTEVGDVAKQYLEKGLLV. AMP contacts are provided by Ser-36 and Arg-41. N6-succinyllysine is present on Lys-60. AMP contacts are provided by residues 62 to 64, 89 to 92, and Gln-96; these read LLV and GFPR. Residues 125-162 are LID; it reads RRWIHPSSGRVYNLDFNPPQVLGVDDITGEPLVQQEDD. A ribonucleoside 5'-triphosphate contacts are provided by residues Arg-126 and 135 to 136; that span reads VY. Arg-170 is a binding site for AMP. Lys-175 carries the post-translational modification N6-acetyllysine. N6-acetyllysine; alternate occurs at positions 179 and 186. An N6-succinyllysine; alternate mark is found at Lys-179 and Lys-186. A ribonucleoside 5'-triphosphate is bound at residue Thr-199.

This sequence belongs to the adenylate kinase family. AK3 subfamily. As to quaternary structure, monomer. Interacts with SLC25A5/ANT2. As to expression, expressed in the pyramidal cells in the hippocampus.

It localises to the mitochondrion matrix. The catalysed reaction is a ribonucleoside 5'-phosphate + ATP = a ribonucleoside 5'-diphosphate + ADP. It carries out the reaction AMP + ATP = 2 ADP. It catalyses the reaction GTP + AMP = GDP + ADP. The enzyme catalyses CMP + ATP = CDP + ADP. The catalysed reaction is GTP + CMP = CDP + GDP. It carries out the reaction dAMP + ATP = dADP + ADP. It catalyses the reaction dCMP + ATP = dCDP + ADP. The enzyme catalyses a 2'-deoxyribonucleoside 5'-diphosphate + ATP = a 2'-deoxyribonucleoside 5'-triphosphate + ADP. The catalysed reaction is a ribonucleoside 5'-diphosphate + ATP = a ribonucleoside 5'-triphosphate + ADP. It carries out the reaction GDP + ATP = GTP + ADP. It catalyses the reaction CDP + GTP = CTP + GDP. The enzyme catalyses CDP + ATP = CTP + ADP. The catalysed reaction is UDP + ATP = UTP + ADP. It carries out the reaction GTP + UDP = UTP + GDP. It catalyses the reaction dADP + GTP = dATP + GDP. The enzyme catalyses dCDP + GTP = dCTP + GDP. The catalysed reaction is dCDP + ATP = dCTP + ADP. It carries out the reaction dGDP + ATP = dGTP + ADP. It catalyses the reaction dTDP + GTP = dTTP + GDP. The enzyme catalyses dTDP + ATP = dTTP + ADP. Its function is as follows. Broad-specificity mitochondrial nucleoside phosphate kinase involved in cellular nucleotide homeostasis by catalyzing nucleoside-phosphate interconversions. Similar to other adenylate kinases, preferentially catalyzes the phosphorylation of the nucleoside monophosphate AMP with ATP as phosphate donor to produce ADP. Phosphorylates only AMP when using GTP as phosphate donor. In vitro, can also catalyze the phosphorylation of CMP, dAMP and dCMP and use GTP as an alternate phosphate donor. Moreover, exhibits a diphosphate kinase activity, producing ATP, CTP, GTP, UTP, TTP, dATP, dCTP and dGTP from the corresponding diphosphate substrates with either ATP or GTP as phosphate donors. Plays a role in controlling cellular ATP levels by regulating phosphorylation and activation of the energy sensor protein kinase AMPK. Plays a protective role in the cellular response to oxidative stress. This is Adenylate kinase 4, mitochondrial from Rattus norvegicus (Rat).